The following is a 733-amino-acid chain: Protein OBERON 3 (733 aa).

A compositionally biased stretch (basic and acidic residues) spans 1–15 (MIGEKDLAGDGECSR). Disordered regions lie at residues 1 to 42 (MIGE…YHQK) and 118 to 142 (NPNS…KKSN). A compositionally biased stretch (polar residues) spans 21 to 30 (PRFSNLNNQT). Residues 120 to 153 (NSSKRKAHEEEEEAEEEEDKKSNKIETLNLSLAL) are a coiled coil. A PHD-type zinc finger spans residues 436 to 500 (SCMCPVCLRF…MFHCIGCAHK (65 aa)). The disordered stretch occupies residues 592-614 (VAAETSYRKDEASVTPSTSKDQK). Positions 644–733 (MFQKKADEAR…RMEVTRQQLV (90 aa)) form a coiled coil.

As to quaternary structure, self-interacts. Interacts with OBE1 and OBE2. Interacts with OBE4.

Its subcellular location is the nucleus. Functionally, probable transcription factor that functions redundantly with OBE4 in specification of the hypophysis and establishment of the embryonic root. Involved in the activation of ARF5/MP-dependent gene expression during embryonic root meristem initiation. Involved in shoot meristem homeostasis. The sequence is that of Protein OBERON 3 from Arabidopsis thaliana (Mouse-ear cress).